Here is a 103-residue protein sequence, read N- to C-terminus: Large ribosomal subunit protein bL21 (103 aa).

The protein belongs to the bacterial ribosomal protein bL21 family. In terms of assembly, part of the 50S ribosomal subunit. Contacts protein L20.

In terms of biological role, this protein binds to 23S rRNA in the presence of protein L20. This is Large ribosomal subunit protein bL21 from Haemophilus ducreyi (strain 35000HP / ATCC 700724).